We begin with the raw amino-acid sequence, 320 residues long: Cytochrome f (320 aa).

The first 35 residues, 1–35 (MQTRKTLSWIKEEITRSISVSLMIYIITGAYISNA), serve as a signal peptide directing secretion. Tyrosine 36, cysteine 56, cysteine 59, and histidine 60 together coordinate heme. A helical transmembrane segment spans residues 286–306 (VQGLLFFLASVILAQIFLVLK).

The protein belongs to the cytochrome f family. In terms of assembly, the 4 large subunits of the cytochrome b6-f complex are cytochrome b6, subunit IV (17 kDa polypeptide, petD), cytochrome f and the Rieske protein, while the 4 small subunits are PetG, PetL, PetM and PetN. The complex functions as a dimer. It depends on heme as a cofactor.

It localises to the plastid. The protein localises to the chloroplast thylakoid membrane. In terms of biological role, component of the cytochrome b6-f complex, which mediates electron transfer between photosystem II (PSII) and photosystem I (PSI), cyclic electron flow around PSI, and state transitions. The protein is Cytochrome f of Populus trichocarpa (Western balsam poplar).